The sequence spans 306 residues: NAD kinase 1 (306 aa).

The active-site Proton acceptor is the Asp-67. NAD(+) is bound by residues 67-68 (DG), 149-150 (ND), and Asp-181.

The protein belongs to the NAD kinase family. Requires a divalent metal cation as cofactor.

The protein localises to the cytoplasm. The catalysed reaction is NAD(+) + ATP = ADP + NADP(+) + H(+). Involved in the regulation of the intracellular balance of NAD and NADP, and is a key enzyme in the biosynthesis of NADP. Catalyzes specifically the phosphorylation on 2'-hydroxyl of the adenosine moiety of NAD to yield NADP. This is NAD kinase 1 from Synechococcus sp. (strain ATCC 27144 / PCC 6301 / SAUG 1402/1) (Anacystis nidulans).